The primary structure comprises 404 residues: Alanyl-tRNA editing protein AlaX-L (404 aa).

Histidine 104, histidine 108, cysteine 202, and histidine 206 together coordinate Zn(2+).

It belongs to the class-II aminoacyl-tRNA synthetase family. Editing domain AlaX-L subfamily. Zn(2+) is required as a cofactor.

The protein resides in the cytoplasm. Functions in trans to edit the amino acid moiety from mischarged charged tRNA(Ala). In Pyrococcus horikoshii (strain ATCC 700860 / DSM 12428 / JCM 9974 / NBRC 100139 / OT-3), this protein is Alanyl-tRNA editing protein AlaX-L (alaXL).